The sequence spans 152 residues: Xanthine-guanine phosphoribosyltransferase (152 aa).

5-phospho-alpha-D-ribose 1-diphosphate is bound by residues 37-38 and 88-96; these read RG and DDLVDTGNT. Residue aspartate 89 coordinates Mg(2+). Aspartate 92 and isoleucine 135 together coordinate guanine. Xanthine-binding residues include aspartate 92 and isoleucine 135. GMP is bound by residues 92 to 96 and 134 to 135; these read DTGNT and WI.

It belongs to the purine/pyrimidine phosphoribosyltransferase family. XGPT subfamily. Homotetramer. It depends on Mg(2+) as a cofactor.

The protein resides in the cell inner membrane. It catalyses the reaction GMP + diphosphate = guanine + 5-phospho-alpha-D-ribose 1-diphosphate. It carries out the reaction XMP + diphosphate = xanthine + 5-phospho-alpha-D-ribose 1-diphosphate. The catalysed reaction is IMP + diphosphate = hypoxanthine + 5-phospho-alpha-D-ribose 1-diphosphate. It functions in the pathway purine metabolism; GMP biosynthesis via salvage pathway; GMP from guanine: step 1/1. It participates in purine metabolism; XMP biosynthesis via salvage pathway; XMP from xanthine: step 1/1. Functionally, purine salvage pathway enzyme that catalyzes the transfer of the ribosyl-5-phosphate group from 5-phospho-alpha-D-ribose 1-diphosphate (PRPP) to the N9 position of the 6-oxopurines guanine and xanthine to form the corresponding ribonucleotides GMP (guanosine 5'-monophosphate) and XMP (xanthosine 5'-monophosphate), with the release of PPi. To a lesser extent, also acts on hypoxanthine. The polypeptide is Xanthine-guanine phosphoribosyltransferase (Mannheimia succiniciproducens (strain KCTC 0769BP / MBEL55E)).